The following is a 138-amino-acid chain: Probable DNA-directed RNA polymerases I, II, and III subunit RPABC2 (138 aa).

2 stretches are compositionally biased toward acidic residues: residues 1-27 and 35-46; these read MADD…VIEE and EEEDDDNNVDEN. The tract at residues 1 to 46 is disordered; the sequence is MADDDDYQDMDNDDFVDDNEMEDVIEEEQQRPDHEEEDDDNNVDEN.

The protein belongs to the archaeal Rpo6/eukaryotic RPB6 RNA polymerase subunit family. As to quaternary structure, component of the RNA polymerase I (Pol I), RNA polymerase II (Pol II) and RNA polymerase III (Pol III) complexes consisting of at least 13, 12 and 17 subunits, respectively.

The protein localises to the nucleus. DNA-dependent RNA polymerases catalyze the transcription of DNA into RNA using the four ribonucleoside triphosphates as substrates. Common component of RNA polymerases I, II and III which synthesize ribosomal RNA precursors, mRNA precursors and many functional non-coding RNAs, and small RNAs, such as 5S rRNA and tRNAs, respectively. Pol II is the central component of the basal RNA polymerase II transcription machinery. Pols are composed of mobile elements that move relative to each other. In Pol II, RPB6 is part of the clamp element and together with parts of RPB1 and RPB2 forms a pocket to which the RPB4-RPB7 subcomplex binds. In Caenorhabditis briggsae, this protein is Probable DNA-directed RNA polymerases I, II, and III subunit RPABC2.